We begin with the raw amino-acid sequence, 310 residues long: Pantoate--beta-alanine ligase (310 aa).

32–39 is an ATP binding site; it reads MGYLHEGH. The active-site Proton donor is the His-39. Residue Gln-63 participates in (R)-pantoate binding. Gln-63 contacts beta-alanine. 175–178 is an ATP binding site; that stretch reads GKKD. Residue Gln-181 participates in (R)-pantoate binding. Residue 212 to 215 coordinates ATP; it reads MSSR.

Belongs to the pantothenate synthetase family. As to quaternary structure, homodimer. As to expression, expressed in roots, cotyledons, leaves, stems, cauline leaves, stigma, sepals and petals.

The protein localises to the cytoplasm. It is found in the cytosol. The enzyme catalyses (R)-pantoate + beta-alanine + ATP = (R)-pantothenate + AMP + diphosphate + H(+). It functions in the pathway cofactor biosynthesis; (R)-pantothenate biosynthesis; (R)-pantothenate from (R)-pantoate and beta-alanine: step 1/1. Its activity is regulated as follows. Enzyme kinetics do not match Michaelis-Menten kinetics, suggesting allosteric behavior. Inhibited by high pantoate levels. Catalyzes the condensation of pantoate with beta-alanine to form pantothenate. Essential for panthotenate biosynthesis. The sequence is that of Pantoate--beta-alanine ligase from Arabidopsis thaliana (Mouse-ear cress).